The primary structure comprises 146 residues: Large ribosomal subunit protein uL15 (146 aa).

The interval 1–51 is disordered; that stretch reads MQLNTIKPAEGSKKNRRHVGRGIGSGLGKTAGRGHKGQKSRSGGFHKVGFE. Residues 21–31 are compositionally biased toward gly residues; that stretch reads RGIGSGLGKTA.

It belongs to the universal ribosomal protein uL15 family. Part of the 50S ribosomal subunit.

In terms of biological role, binds to the 23S rRNA. In Polynucleobacter necessarius subsp. necessarius (strain STIR1), this protein is Large ribosomal subunit protein uL15.